We begin with the raw amino-acid sequence, 196 residues long: Somatotropin (196 aa).

The N-terminal stretch at 1-16 (MDKVILVLLMSLGASS) is a signal peptide. Glutamine 17 carries the pyrrolidone carboxylic acid modification. Histidine 35 serves as a coordination point for Zn(2+). Cysteine 67 and cysteine 169 form a disulfide bridge. Glutamate 178 lines the Zn(2+) pocket. A disulfide bond links cysteine 186 and cysteine 194.

Belongs to the somatotropin/prolactin family.

Its subcellular location is the secreted. Functionally, growth hormone plays an important role in growth control and is involved in the regulation of several anabolic processes. Implicated as an osmoregulatory substance important for seawater adaptation. This is Somatotropin (gh) from Takifugu rubripes (Japanese pufferfish).